Here is a 339-residue protein sequence, read N- to C-terminus: Protein RETICULATA-RELATED 2, chloroplastic (339 aa).

Residues 1-58 constitute a chloroplast transit peptide; sequence MAAMAAKLHISTKSDQSNVRLPRLINLSRDPTARVLFPRNGSVSSLHTNFSSPNIMVP. Over residues 68–86 the composition is skewed to gly residues; sequence IGNHGGGSGSGGGGGGYGG. A disordered region spans residues 68-92; it reads IGNHGGGSGSGGGGGGYGGSEEEES. A run of 2 helical transmembrane segments spans residues 148 to 168 and 213 to 233; these read FVFSTLVVGSILNFTLMYLLA and VFATVGLAAGLVGTAISNGLI.

It belongs to the RETICULATA family.

The protein resides in the plastid. It localises to the chloroplast membrane. Its function is as follows. May play a role in leaf development. The chain is Protein RETICULATA-RELATED 2, chloroplastic from Arabidopsis thaliana (Mouse-ear cress).